Consider the following 309-residue polypeptide: Ferrochelatase (309 aa).

Fe cation is bound by residues H185 and E262.

The protein belongs to the ferrochelatase family.

The protein localises to the cytoplasm. It carries out the reaction heme b + 2 H(+) = protoporphyrin IX + Fe(2+). It functions in the pathway porphyrin-containing compound metabolism; protoheme biosynthesis; protoheme from protoporphyrin-IX: step 1/1. Functionally, catalyzes the ferrous insertion into protoporphyrin IX. This chain is Ferrochelatase, found in Campylobacter jejuni subsp. jejuni serotype O:23/36 (strain 81-176).